The sequence spans 132 residues: ALADAALRQCMPCGPGDRGNCFGPSICCGAELGCYVGTAETLRCAEENYLPSPCRAGGQPCGAGGRCAAPGICCSDETCSLEPACLEEAGERGGEPAQKNLTGLDASAGDFLLKLMHLAANRQQQGGKGPLL.

Disulfide bonds link cysteine 10/cysteine 54, cysteine 13/cysteine 27, cysteine 21/cysteine 44, cysteine 28/cysteine 34, cysteine 61/cysteine 73, cysteine 67/cysteine 85, and cysteine 74/cysteine 79.

The protein belongs to the vasopressin/oxytocin family.

It is found in the secreted. Functionally, neurophysin 2 specifically binds vasopressin. This Struthio camelus (Common ostrich) protein is Neurophysin 2.